A 587-amino-acid chain; its full sequence is Phosphomethylpyrimidine synthase (587 aa).

Substrate is bound by residues Asn-218, Met-247, Tyr-276, His-312, Ser-332–Gly-334, Asp-373–Arg-376, and Glu-412. His-416 provides a ligand contact to Zn(2+). Residue Tyr-439 coordinates substrate. His-480 serves as a coordination point for Zn(2+). 3 residues coordinate [4Fe-4S] cluster: Cys-560, Cys-563, and Cys-568.

The protein belongs to the ThiC family. [4Fe-4S] cluster is required as a cofactor.

The enzyme catalyses 5-amino-1-(5-phospho-beta-D-ribosyl)imidazole + S-adenosyl-L-methionine = 4-amino-2-methyl-5-(phosphooxymethyl)pyrimidine + CO + 5'-deoxyadenosine + formate + L-methionine + 3 H(+). Its pathway is cofactor biosynthesis; thiamine diphosphate biosynthesis. Catalyzes the synthesis of the hydroxymethylpyrimidine phosphate (HMP-P) moiety of thiamine from aminoimidazole ribotide (AIR) in a radical S-adenosyl-L-methionine (SAM)-dependent reaction. This is Phosphomethylpyrimidine synthase from Porphyromonas gingivalis (strain ATCC 33277 / DSM 20709 / CIP 103683 / JCM 12257 / NCTC 11834 / 2561).